Consider the following 55-residue polypeptide: Large ribosomal subunit protein bL33 (55 aa).

Belongs to the bacterial ribosomal protein bL33 family.

This chain is Large ribosomal subunit protein bL33, found in Rhodopseudomonas palustris (strain BisB18).